A 123-amino-acid chain; its full sequence is Large-conductance mechanosensitive channel (123 aa).

Helical transmembrane passes span 14 to 34 (VLDL…VTSL) and 67 to 87 (GNFI…FLLV).

This sequence belongs to the MscL family. As to quaternary structure, homopentamer.

It localises to the cell membrane. Its function is as follows. Channel that opens in response to stretch forces in the membrane lipid bilayer. May participate in the regulation of osmotic pressure changes within the cell. The chain is Large-conductance mechanosensitive channel from Lacticaseibacillus casei (strain BL23) (Lactobacillus casei).